The sequence spans 371 residues: GDP-perosamine synthase (371 aa).

N6-(pyridoxal phosphate)lysine is present on Lys186.

Belongs to the DegT/DnrJ/EryC1 family. Homodimer. It depends on pyridoxal 5'-phosphate as a cofactor.

It catalyses the reaction GDP-alpha-D-perosamine + 2-oxoglutarate = GDP-4-dehydro-alpha-D-rhamnose + L-glutamate. It participates in bacterial outer membrane biogenesis; LPS O-antigen biosynthesis. Functionally, catalyzes the synthesis of GDP-perosamine from GDP-4-keto-6-deoxy-D-mannose and L-glutamate. Can use only L-glutamate as amino donor. In vitro, can also use GDP-4-keto-3,6-dideoxymannose to produce GDP-3-deoxyperosamine. Involved in the formation of S-LPS, which is required for attachment of the protein S-layer to the outer membrane surface. The chain is GDP-perosamine synthase from Caulobacter vibrioides (strain ATCC 19089 / CIP 103742 / CB 15) (Caulobacter crescentus).